The sequence spans 362 residues: Aminomethyltransferase (362 aa).

This sequence belongs to the GcvT family. As to quaternary structure, the glycine cleavage system is composed of four proteins: P, T, L and H.

The enzyme catalyses N(6)-[(R)-S(8)-aminomethyldihydrolipoyl]-L-lysyl-[protein] + (6S)-5,6,7,8-tetrahydrofolate = N(6)-[(R)-dihydrolipoyl]-L-lysyl-[protein] + (6R)-5,10-methylene-5,6,7,8-tetrahydrofolate + NH4(+). Functionally, the glycine cleavage system catalyzes the degradation of glycine. This is Aminomethyltransferase from Listeria innocua serovar 6a (strain ATCC BAA-680 / CLIP 11262).